Consider the following 220-residue polypeptide: Small ribosomal subunit protein mS42 (220 aa).

It belongs to the mitochondrion-specific ribosomal protein mS42 family. In terms of assembly, component of the mitochondrial small ribosomal subunit (mt-SSU). Mature yeast 74S mitochondrial ribosomes consist of a small (37S) and a large (54S) subunit. The 37S small subunit contains a 15S ribosomal RNA (15S mt-rRNA) and at least 32 different proteins. The 54S large subunit contains a 21S rRNA (21S mt-rRNA) and at least 45 different proteins. mS43 forms a dimer with mS42, building a large protuberance adjacent to the mRNA channel exit in the mt-SSU body.

It localises to the mitochondrion. Its function is as follows. Component of the mitochondrial ribosome (mitoribosome), a dedicated translation machinery responsible for the synthesis of mitochondrial genome-encoded proteins, including at least some of the essential transmembrane subunits of the mitochondrial respiratory chain. The mitoribosomes are attached to the mitochondrial inner membrane and translation products are cotranslationally integrated into the membrane. The protein is Small ribosomal subunit protein mS42 of Schizosaccharomyces pombe (strain 972 / ATCC 24843) (Fission yeast).